Consider the following 193-residue polypeptide: Penicillin-binding protein activator LpoB (193 aa).

The N-terminal stretch at 1 to 16 (MKKMLFVVAAVFLLAG) is a signal peptide. Residue cysteine 17 is the site of N-palmitoyl cysteine attachment. Residue cysteine 17 is the site of S-diacylglycerol cysteine attachment. The disordered stretch occupies residues 23 to 50 (QQPPAPVEPVTPTEPTEPPKPIEPPIEV). Residues 37 to 46 (PTEPPKPIEP) are compositionally biased toward pro residues.

This sequence belongs to the LpoB family. As to quaternary structure, interacts with PBP1b.

It is found in the cell outer membrane. Its function is as follows. Regulator of peptidoglycan synthesis that is essential for the function of penicillin-binding protein 1B (PBP1b). The protein is Penicillin-binding protein activator LpoB of Proteus mirabilis (strain HI4320).